The primary structure comprises 602 residues: UvrABC system protein C (602 aa).

Residues T17–I94 enclose the GIY-YIG domain. Residues S199–I234 enclose the UVR domain.

The protein belongs to the UvrC family. In terms of assembly, interacts with UvrB in an incision complex.

The protein resides in the cytoplasm. Functionally, the UvrABC repair system catalyzes the recognition and processing of DNA lesions. UvrC both incises the 5' and 3' sides of the lesion. The N-terminal half is responsible for the 3' incision and the C-terminal half is responsible for the 5' incision. The chain is UvrABC system protein C from Borrelia hermsii (strain HS1 / DAH).